The chain runs to 188 residues: uncharacterized protein (188 aa).

Residues Pro133–Arg153 are disordered.

This sequence belongs to the IS150/IS1296 orfA family.

This is an uncharacterized protein from Haemophilus influenzae (strain ATCC 51907 / DSM 11121 / KW20 / Rd).